Here is a 622-residue protein sequence, read N- to C-terminus: Threonine--tRNA ligase (622 aa).

Positions Met-1–Glu-141 are editing domain. Residues Pro-199 to Pro-498 form a catalytic region. Zn(2+) contacts are provided by Cys-291, His-343, and His-467.

The protein belongs to the class-II aminoacyl-tRNA synthetase family. In terms of assembly, homodimer. It depends on Zn(2+) as a cofactor.

The protein resides in the cytoplasm. The enzyme catalyses tRNA(Thr) + L-threonine + ATP = L-threonyl-tRNA(Thr) + AMP + diphosphate + H(+). Functionally, catalyzes the attachment of threonine to tRNA(Thr) in a two-step reaction: L-threonine is first activated by ATP to form Thr-AMP and then transferred to the acceptor end of tRNA(Thr). Also edits incorrectly charged L-seryl-tRNA(Thr). The sequence is that of Threonine--tRNA ligase from Methanococcus maripaludis (strain C6 / ATCC BAA-1332).